Consider the following 349-residue polypeptide: Phosphoribosylformylglycinamidine cyclo-ligase (349 aa).

Belongs to the AIR synthase family.

It localises to the cytoplasm. It catalyses the reaction 2-formamido-N(1)-(5-O-phospho-beta-D-ribosyl)acetamidine + ATP = 5-amino-1-(5-phospho-beta-D-ribosyl)imidazole + ADP + phosphate + H(+). The protein operates within purine metabolism; IMP biosynthesis via de novo pathway; 5-amino-1-(5-phospho-D-ribosyl)imidazole from N(2)-formyl-N(1)-(5-phospho-D-ribosyl)glycinamide: step 2/2. The polypeptide is Phosphoribosylformylglycinamidine cyclo-ligase (Methanococcus maripaludis (strain C6 / ATCC BAA-1332)).